A 260-amino-acid chain; its full sequence is Acyl-[acyl-carrier-protein]--UDP-N-acetylglucosamine O-acyltransferase (260 aa).

It belongs to the transferase hexapeptide repeat family. LpxA subfamily. In terms of assembly, homotrimer.

It is found in the cytoplasm. The catalysed reaction is a (3R)-hydroxyacyl-[ACP] + UDP-N-acetyl-alpha-D-glucosamine = a UDP-3-O-[(3R)-3-hydroxyacyl]-N-acetyl-alpha-D-glucosamine + holo-[ACP]. The protein operates within glycolipid biosynthesis; lipid IV(A) biosynthesis; lipid IV(A) from (3R)-3-hydroxytetradecanoyl-[acyl-carrier-protein] and UDP-N-acetyl-alpha-D-glucosamine: step 1/6. Functionally, involved in the biosynthesis of lipid A, a phosphorylated glycolipid that anchors the lipopolysaccharide to the outer membrane of the cell. This Aliarcobacter butzleri (strain RM4018) (Arcobacter butzleri) protein is Acyl-[acyl-carrier-protein]--UDP-N-acetylglucosamine O-acyltransferase.